Here is a 97-residue protein sequence, read N- to C-terminus: Co-chaperonin GroES (97 aa).

This sequence belongs to the GroES chaperonin family. In terms of assembly, heptamer of 7 subunits arranged in a ring. Interacts with the chaperonin GroEL.

The protein resides in the cytoplasm. Together with the chaperonin GroEL, plays an essential role in assisting protein folding. The GroEL-GroES system forms a nano-cage that allows encapsulation of the non-native substrate proteins and provides a physical environment optimized to promote and accelerate protein folding. GroES binds to the apical surface of the GroEL ring, thereby capping the opening of the GroEL channel. The polypeptide is Co-chaperonin GroES (Escherichia fergusonii (strain ATCC 35469 / DSM 13698 / CCUG 18766 / IAM 14443 / JCM 21226 / LMG 7866 / NBRC 102419 / NCTC 12128 / CDC 0568-73)).